The primary structure comprises 322 residues: Phospholipase A1 (322 aa).

A signal peptide spans 1–18 (MNFKYSILFICFGTLDRG). Cys-23 and Cys-106 form a disulfide bridge. Ser-156 functions as the Nucleophile in the catalytic mechanism. The Charge relay system role is filled by Asp-184. 2 cysteine pairs are disulfide-bonded: Cys-195-Cys-200 and Cys-238-Cys-246. The active-site Charge relay system is His-248. Disulfide bonds link Cys-263/Cys-290, Cys-264/Cys-315, and Cys-283/Cys-288.

The protein belongs to the AB hydrolase superfamily. Lipase family. Post-translationally, contains six disulfide bonds. In terms of processing, is not glycosylated. Expressed by the venom gland.

Its subcellular location is the secreted. The enzyme catalyses a 1,2-diacyl-sn-glycero-3-phosphocholine + H2O = a 2-acyl-sn-glycero-3-phosphocholine + a fatty acid + H(+). Functionally, catalyzes the hydrolysis of phosphatidylcholine with phospholipase A1 activity. Shows hemolytic activity. Acts as an allergen. This Polybia paulista (Neotropical social wasp) protein is Phospholipase A1.